The sequence spans 148 residues: IQ domain-containing protein F5 (148 aa).

2 IQ domains span residues 11–40 (ETSAAVRIQAWWRGTLLRRTLLHAALSAWI) and 67–96 (KTWAIVKLQSWFRMWHIRHRYCRLLNAVRI).

This Mus musculus (Mouse) protein is IQ domain-containing protein F5 (Iqcf5).